The following is a 362-amino-acid chain: Aminomethyltransferase (362 aa).

This sequence belongs to the GcvT family. The glycine cleavage system is composed of four proteins: P, T, L and H.

It carries out the reaction N(6)-[(R)-S(8)-aminomethyldihydrolipoyl]-L-lysyl-[protein] + (6S)-5,6,7,8-tetrahydrofolate = N(6)-[(R)-dihydrolipoyl]-L-lysyl-[protein] + (6R)-5,10-methylene-5,6,7,8-tetrahydrofolate + NH4(+). Functionally, the glycine cleavage system catalyzes the degradation of glycine. The sequence is that of Aminomethyltransferase from Chromobacterium violaceum (strain ATCC 12472 / DSM 30191 / JCM 1249 / CCUG 213 / NBRC 12614 / NCIMB 9131 / NCTC 9757 / MK).